The sequence spans 388 residues: 3-dehydroquinate synthase (388 aa).

The protein belongs to the archaeal-type DHQ synthase family.

The catalysed reaction is 2-amino-2,3,7-trideoxy-D-lyxo-hept-6-ulosonate + NAD(+) + H2O = 3-dehydroquinate + NH4(+) + NADH + H(+). Its function is as follows. Catalyzes the oxidative deamination and cyclization of 2-amino-3,7-dideoxy-D-threo-hept-6-ulosonic acid (ADH) to yield 3-dehydroquinate (DHQ), which is fed into the canonical shikimic pathway of aromatic amino acid biosynthesis. This is 3-dehydroquinate synthase from Natronomonas pharaonis (strain ATCC 35678 / DSM 2160 / CIP 103997 / JCM 8858 / NBRC 14720 / NCIMB 2260 / Gabara) (Halobacterium pharaonis).